We begin with the raw amino-acid sequence, 399 residues long: Bombesin receptor subtype-3 (399 aa).

The Extracellular segment spans residues 1–41 (MSQRQSQSPNQTLISITNDTETSSSVVSNDTTHKGWTGDNS). Asn10, Asn18, and Asn29 each carry an N-linked (GlcNAc...) asparagine glycan. Residues 42-63 (PGIEALCAIYITYAGIISVGIL) form a helical membrane-spanning segment. At 64–82 (GNAILIKVFFKTKSMQTVP) the chain is on the cytoplasmic side. A helical transmembrane segment spans residues 83-103 (NIFITSLAFGDLLLLLTCVPV). The Extracellular portion of the chain corresponds to 104 to 121 (DATHYLAEGWLFGKVGCK). Cys120 and Cys203 are disulfide-bonded. Residues 122–143 (VLSFIRLTSVGVSVFTLTILSA) form a helical membrane-spanning segment. The Cytoplasmic portion of the chain corresponds to 144–163 (DRYKAVVKPLERQPPNAILK). The chain crosses the membrane as a helical span at residues 164-184 (TCAKAGGIWIVSMIFALPEAI). Residues 185–220 (FSNVYTFQDPNRNVTFESCNSYPISERLLQEIHSLL) lie on the Extracellular side of the membrane. A helical transmembrane segment spans residues 221 to 241 (CFLVFYIIPLSIISVYYSLIA). Residues 242–272 (RTLYKSTLNIPTEEQSHARKQIESRKRIAKT) lie on the Cytoplasmic side of the membrane. Residues 273-293 (VLVLVALFALCWLPNHLLYLY) traverse the membrane as a helical segment. Topologically, residues 294-313 (HSFTYESYANHSDVPFVIII) are extracellular. Residues 314 to 333 (FSRVLAFSNSCVNPFALYWL) traverse the membrane as a helical segment. Topologically, residues 334–399 (SKTFQQHFKA…SSAKKGEDKV (66 aa)) are cytoplasmic. The S-palmitoyl cysteine moiety is linked to residue Cys347.

It belongs to the G-protein coupled receptor 1 family. Interacts with C6orf89.

It localises to the cell membrane. In terms of biological role, role in sperm cell division, maturation, or function. This receptor mediates its action by association with G proteins that activate a phosphatidylinositol-calcium second messenger system. The protein is Bombesin receptor subtype-3 (Brs3) of Mus musculus (Mouse).